Consider the following 144-residue polypeptide: Gas vesicle protein I1 (144 aa).

Residues 1–144 (MSDKQQQKHK…SPTEDEVNDE (144 aa)) form a disordered region. Basic residues-rich tracts occupy residues 7–17 (QKHKQKARQAR) and 26–46 (KARR…TRNR). The segment covering 75 to 94 (MPPQKSNAENAVRNSHSTVP) has biased composition (polar residues). The span at 122 to 136 (SEASAPSDESASGSP) shows a compositional bias: low complexity.

The protein belongs to the gas vesicle GvpI family. As to quaternary structure, gvpF to GvpM interact with each other in vitro, and may form multi-subunit complex(es). Interacts with GvpC1 and GvpO.

It localises to the gas vesicle. In terms of biological role, proteins GvpF to GvpM might be involved in nucleating gas vesicle formation. A minor component of the gas vesicle. Gas vesicles are hollow, gas filled proteinaceous nanostructures found in several microbial planktonic microorganisms. They allow positioning of halobacteria at the optimal depth for growth in the poorly aerated, shallow brine pools of their habitat. Functionally, expression of a 9.5 kb p-vac DNA fragment containing 2 divergently transcribed regions (gvpD-gvpE-gvpF-gvpG-gvpH-gvpI-gvpJ-gvpK-gvpL-gvpM and gvpA-gvpC-gvpN-gvpO) allows H.volcanii to produce gas vesicles. A similar region restores gas vesicle production in H.halobium without the p-vac locus, but it still has the c-vac locus. This is Gas vesicle protein I1 (gvpI11) from Halobacterium salinarum (strain ATCC 700922 / JCM 11081 / NRC-1) (Halobacterium halobium).